The chain runs to 133 residues: UPF0134 protein MPN_151 (133 aa).

Belongs to the UPF0134 family.

This is UPF0134 protein MPN_151 from Mycoplasma pneumoniae (strain ATCC 29342 / M129 / Subtype 1) (Mycoplasmoides pneumoniae).